The primary structure comprises 935 residues: Kinesin heavy chain (935 aa).

One can recognise a Kinesin motor domain in the interval asparagine 5–isoleucine 329. Residues glycine 87–threonine 94 and glycine 237–threonine 244 contribute to the ATP site. Positions alanine 342–alanine 887 form a coiled coil. 2 disordered regions span residues alanine 400–proline 419 and arginine 898–arginine 935.

The protein belongs to the TRAFAC class myosin-kinesin ATPase superfamily. Kinesin family. Kinesin subfamily.

The protein resides in the cytoplasm. Its subcellular location is the cytoskeleton. Functionally, kinesin is a microtubule-associated force-producing protein that may play a role in organelle transport. Its motor activity is directed toward the microtubule's plus end. The speed of this motor is 4-5 times faster than its animal counterparts. The polypeptide is Kinesin heavy chain (Syncephalastrum racemosum (Filamentous fungus)).